Reading from the N-terminus, the 293-residue chain is MFNFFKKIVNKIKGEEVKEKKRESVPKEELEEILIGFDIQYDLIESLLKHLGDLITPKQLEVALLRFVRGESYYDKTRLKTITTKPLVHLIVGVNGAGKTTTIAKLAKLSLKQHKKALLGAGDTFRAAAVKQLQLWGEKLNVQVISAKEGSDPSSLAYNTIESAIAKNIDEVFIDTAGRLHNQTNLKNELSKIAHTCSKVLKDAPFYKFLILDGTQGSSGLTQAKIFHETLALDGVIMTKLDGTSKGGAILSVLYELKLPILYLGMGEKEDDLIAFDEERFIEDLVDAVFVEQ.

Residues 93–100, 175–179, and 239–242 contribute to the GTP site; these read GVNGAGKT, DTAGR, and TKLD.

The protein belongs to the GTP-binding SRP family. FtsY subfamily. In terms of assembly, part of the signal recognition particle protein translocation system, which is composed of SRP and FtsY. SRP is a ribonucleoprotein composed of Ffh and a 4.5S RNA molecule.

It localises to the cell inner membrane. The protein localises to the cytoplasm. The enzyme catalyses GTP + H2O = GDP + phosphate + H(+). Functionally, involved in targeting and insertion of nascent membrane proteins into the cytoplasmic membrane. Acts as a receptor for the complex formed by the signal recognition particle (SRP) and the ribosome-nascent chain (RNC). Interaction with SRP-RNC leads to the transfer of the RNC complex to the Sec translocase for insertion into the membrane, the hydrolysis of GTP by both Ffh and FtsY, and the dissociation of the SRP-FtsY complex into the individual components. This Helicobacter pylori (strain J99 / ATCC 700824) (Campylobacter pylori J99) protein is Signal recognition particle receptor FtsY.